The chain runs to 190 residues: U1 small nuclear ribonucleoprotein C-1 (190 aa).

Residues 4–36 (YYCDYCDVFLVSESPSVRKAHNSGRNHLTNVRD) form a Matrin-type zinc finger. A disordered region spans residues 57 to 190 (FETGGGNSTS…PDRARQLGLI (134 aa)). Positions 72–82 (GNPPGSQPGPP) are enriched in pro residues. The segment covering 109–124 (AMLALMNGQNGMSSPG) has biased composition (low complexity). Residues 125–141 (SGPPPMRFAGPPIPNNM) are compositionally biased toward pro residues. Basic and acidic residues predominate over residues 180–190 (NPDRARQLGLI).

It belongs to the U1 small nuclear ribonucleoprotein C family. U1 snRNP is composed of the 7 core Sm proteins B/B', D1, D2, D3, E, F and G that assemble in a heptameric protein ring on the Sm site of the small nuclear RNA to form the core snRNP, and at least 3 U1 snRNP-specific proteins U1-70K, U1-A and U1-C. U1-C interacts with U1 snRNA and the 5' splice-site region of the pre-mRNA.

Its subcellular location is the nucleus. In terms of biological role, component of the spliceosomal U1 snRNP, which is essential for recognition of the pre-mRNA 5' splice-site and the subsequent assembly of the spliceosome. U1-C is directly involved in initial 5' splice-site recognition for both constitutive and regulated alternative splicing. The interaction with the 5' splice-site seems to precede base-pairing between the pre-mRNA and the U1 snRNA. Stimulates commitment or early (E) complex formation by stabilizing the base pairing of the 5' end of the U1 snRNA and the 5' splice-site region. This is U1 small nuclear ribonucleoprotein C-1 from Puccinia graminis f. sp. tritici (strain CRL 75-36-700-3 / race SCCL) (Black stem rust fungus).